We begin with the raw amino-acid sequence, 355 residues long: MSVLGELDLLGPRAHGAACGEAVLKAVAEDFQVDEVLDIPLSGEGEHLWLWVEKRGLNTEEAARRLGRAAGVQQKNVSYAGLKDRQALTRQWFSLHLPGKADPDLGAAEGADLRILRRTRHSRKLQRGAHAANGFTLRLTGLRAERALLDARLERIAADGVPNYFGLQRFGHGGGNLVDARSCAEQDLLPANRNLRSRFLSAGRSYLFNRLLAERVAEGSWNRAAVGDLLAFTDSRSFFLAGEEECRDARLAALDLHPTGPLWGEGDPPSGAGVLERELALAGSEPALCRWLAKAGMAHERRILRLPIQGLAWHYPEPDVLQLEFVLPAGCFATVVVREILDLVPTGQTENPCAY.

The active-site Nucleophile is Asp-84. The TRUD domain maps to 160-306 (GVPNYFGLQR…MAHERRILRL (147 aa)).

Belongs to the pseudouridine synthase TruD family.

It carries out the reaction uridine(13) in tRNA = pseudouridine(13) in tRNA. Its function is as follows. Responsible for synthesis of pseudouridine from uracil-13 in transfer RNAs. This Pseudomonas aeruginosa (strain LESB58) protein is tRNA pseudouridine synthase D.